A 1239-amino-acid chain; its full sequence is WD repeat-containing protein 11 (1239 aa).

WD repeat units follow at residues Arg-63 to Glu-112, Glu-115 to Lys-158, Thr-358 to Ser-398, Arg-476 to Glu-515, Asn-571 to Glu-610, Gly-713 to Val-750, Thr-752 to Ser-792, Asn-798 to Arg-836, and Ser-898 to Phe-944. The interval Glu-1213–Glu-1239 is disordered. The span at Leu-1215–Ser-1226 shows a compositional bias: polar residues.

In terms of assembly, component of the complex WDR11.

It is found in the cytoplasm. The protein resides in the cytoskeleton. It localises to the cilium basal body. The protein localises to the nucleus. Its subcellular location is the cilium axoneme. It is found in the cytoplasmic vesicle. The protein resides in the golgi apparatus. It localises to the trans-Golgi network. Its function is as follows. Involved in the Hedgehog (Hh) signaling pathway, is essential for normal ciliogenesis. Regulates the proteolytic processing of gli3 and cooperates with the transcription factor emx1 in the induction of downstream Hh pathway gene expression and gonadotropin-releasing hormone production. WDR11 complex facilitates the tethering of Adaptor protein-1 complex (AP-1)-derived vesicles. This chain is WD repeat-containing protein 11 (wdr11), found in Danio rerio (Zebrafish).